The chain runs to 70 residues: Small ribosomal subunit protein bS21B (70 aa).

Belongs to the bacterial ribosomal protein bS21 family.

The protein is Small ribosomal subunit protein bS21B of Paraburkholderia xenovorans (strain LB400).